The following is a 258-amino-acid chain: MKKTIVFKCGGSVIRELSADFFQNVKELMQSGWNIAVVHGGGPDISKMLKTLQIETEFVDGQRKTTKPVLETAEMVLSGTINKFFVTELAKNGLKAAGISGKDGGLLQASYLNQDKYGEVGEIQKTDPSIIHALMKEGIIPVIAPLSMTSDFETLNVNADAAASAVASALHADKLLFVTDVEGIMDGESRLDTLTPQEIQALIDDGVISGGMIPKVNSALSALSEDVEEVMIVNGKGAFFTDQAFQGTKIVKEKESVS.

Substrate-binding positions include 41 to 42 (GG), Arg63, and Asn156.

The protein belongs to the acetylglutamate kinase family. ArgB subfamily.

Its subcellular location is the cytoplasm. The catalysed reaction is N-acetyl-L-glutamate + ATP = N-acetyl-L-glutamyl 5-phosphate + ADP. Its pathway is amino-acid biosynthesis; L-arginine biosynthesis; N(2)-acetyl-L-ornithine from L-glutamate: step 2/4. In terms of biological role, catalyzes the ATP-dependent phosphorylation of N-acetyl-L-glutamate. The polypeptide is Acetylglutamate kinase (Bacillus velezensis (strain DSM 23117 / BGSC 10A6 / LMG 26770 / FZB42) (Bacillus amyloliquefaciens subsp. plantarum)).